The following is a 591-amino-acid chain: Aspartate--tRNA(Asp/Asn) ligase (591 aa).

Glutamate 176 provides a ligand contact to L-aspartate. The tract at residues 200–203 (QLFK) is aspartate. L-aspartate is bound at residue arginine 222. Residues 222 to 224 (RDE) and glutamine 231 each bind ATP. Histidine 450 lines the L-aspartate pocket. Glutamate 484 is a binding site for ATP. Position 491 (arginine 491) interacts with L-aspartate. 536–539 (GLDR) serves as a coordination point for ATP.

This sequence belongs to the class-II aminoacyl-tRNA synthetase family. Type 1 subfamily. In terms of assembly, homodimer.

Its subcellular location is the cytoplasm. The catalysed reaction is tRNA(Asx) + L-aspartate + ATP = L-aspartyl-tRNA(Asx) + AMP + diphosphate. Its function is as follows. Aspartyl-tRNA synthetase with relaxed tRNA specificity since it is able to aspartylate not only its cognate tRNA(Asp) but also tRNA(Asn). Reaction proceeds in two steps: L-aspartate is first activated by ATP to form Asp-AMP and then transferred to the acceptor end of tRNA(Asp/Asn). The sequence is that of Aspartate--tRNA(Asp/Asn) ligase from Bacillus cereus (strain B4264).